A 64-amino-acid chain; its full sequence is Large ribosomal subunit protein bL35 (64 aa).

It belongs to the bacterial ribosomal protein bL35 family.

The polypeptide is Large ribosomal subunit protein bL35 (Carboxydothermus hydrogenoformans (strain ATCC BAA-161 / DSM 6008 / Z-2901)).